The following is a 517-amino-acid chain: Crotonobetaine/carnitine--CoA ligase (517 aa).

It belongs to the ATP-dependent AMP-binding enzyme family.

The catalysed reaction is 4-(trimethylamino)butanoate + ATP + CoA = 4-(trimethylamino)butanoyl-CoA + AMP + diphosphate. It catalyses the reaction crotonobetaine + ATP + CoA = crotonobetainyl-CoA + AMP + diphosphate. It carries out the reaction (R)-carnitine + ATP + CoA = (R)-carnitinyl-CoA + AMP + diphosphate. It participates in amine and polyamine metabolism; carnitine metabolism. In terms of biological role, catalyzes the transfer of CoA to carnitine, generating the initial carnitinyl-CoA needed for the CaiB reaction cycle. Also has activity toward crotonobetaine and gamma-butyrobetaine. The protein is Crotonobetaine/carnitine--CoA ligase of Salmonella heidelberg (strain SL476).